Here is a 327-residue protein sequence, read N- to C-terminus: COP9 signalosome complex subunit 6 (327 aa).

The MPN domain maps to 41-174; sequence VALHPLVILN…VSVFESVIDI (134 aa). The tract at residues 211-327 is interaction with Vpr; sequence SGENSTVAEH…IGRRMRGLFF (117 aa).

The protein belongs to the peptidase M67A family. CSN6 subfamily. Component of the CSN complex, composed of COPS1/GPS1, COPS2, COPS3, COPS4, COPS5, COPS6, COPS7 (COPS7A or COPS7B), COPS8 and COPS9 isoform 1. In the complex, it probably interacts directly with COPS2, COPS4, COPS5, COPS7 (COPS7A or COPS7B) and COPS9 isoform 1. Interacts with the translation initiation factor EIF3S6. Interacts weakly with RBX1. Directly interacts with COP1 and 14-3-3 protein sigma/SFN. Interacts with ERCC6. In terms of assembly, (Microbial infection) Interacts with the HIV-1 protein Vpr. As to expression, widely expressed.

It is found in the nucleus. The protein localises to the cytoplasm. Its subcellular location is the perinuclear region. Functionally, component of the COP9 signalosome complex (CSN), a complex involved in various cellular and developmental processes. The CSN complex is an essential regulator of the ubiquitin (Ubl) conjugation pathway by mediating the deneddylation of the cullin subunits of SCF-type E3 ligase complexes, leading to decrease the Ubl ligase activity of SCF-type complexes such as SCF, CSA or DDB2. The complex is also involved in phosphorylation of p53/TP53, c-jun/JUN, IkappaBalpha/NFKBIA, ITPK1 and IRF8, possibly via its association with CK2 and PKD kinases. CSN-dependent phosphorylation of TP53 and JUN promotes and protects degradation by the Ubl system, respectively. Has some glucocorticoid receptor-responsive activity. Stabilizes COP1 through reducing COP1 auto-ubiquitination and decelerating COP1 turnover rate, hence regulates the ubiquitination of COP1 targets. This Homo sapiens (Human) protein is COP9 signalosome complex subunit 6 (COPS6).